The following is a 101-amino-acid chain: ATP-dependent Clp protease adapter protein ClpS 2 (101 aa).

Belongs to the ClpS family. In terms of assembly, binds to the N-terminal domain of the chaperone ClpA.

In terms of biological role, involved in the modulation of the specificity of the ClpAP-mediated ATP-dependent protein degradation. This chain is ATP-dependent Clp protease adapter protein ClpS 2, found in Rhizobium meliloti (strain 1021) (Ensifer meliloti).